The chain runs to 451 residues: Trigger factor (451 aa).

The region spanning 162 to 243 (GDYAIIDITT…VQQSKERKLP (82 aa)) is the PPIase FKBP-type domain.

The protein belongs to the FKBP-type PPIase family. Tig subfamily.

The protein localises to the cytoplasm. The enzyme catalyses [protein]-peptidylproline (omega=180) = [protein]-peptidylproline (omega=0). In terms of biological role, involved in protein export. Acts as a chaperone by maintaining the newly synthesized protein in an open conformation. Functions as a peptidyl-prolyl cis-trans isomerase. The polypeptide is Trigger factor (Corynebacterium aurimucosum (strain ATCC 700975 / DSM 44827 / CIP 107346 / CN-1) (Corynebacterium nigricans)).